A 419-amino-acid polypeptide reads, in one-letter code: Histidine--tRNA ligase (419 aa).

This sequence belongs to the class-II aminoacyl-tRNA synthetase family.

The protein localises to the cytoplasm. It catalyses the reaction tRNA(His) + L-histidine + ATP = L-histidyl-tRNA(His) + AMP + diphosphate + H(+). This Pyrobaculum arsenaticum (strain DSM 13514 / JCM 11321 / PZ6) protein is Histidine--tRNA ligase.